The following is a 66-amino-acid chain: Probable Sec-independent protein translocase protein TatE (66 aa).

A helical transmembrane segment spans residues 1–21 (MEGISITKLLVIAVLIVLLFG). Residues 46 to 66 (ETPAAKKSDGVEAAPRVENKE) form a disordered region.

It belongs to the TatA/E family. TatE subfamily.

The protein resides in the cell inner membrane. Functionally, part of the twin-arginine translocation (Tat) system that transports large folded proteins containing a characteristic twin-arginine motif in their signal peptide across membranes. TatE shares overlapping functions with TatA. The chain is Probable Sec-independent protein translocase protein TatE from Edwardsiella ictaluri (strain 93-146).